A 154-amino-acid polypeptide reads, in one-letter code: Large ribosomal subunit protein uL30 (154 aa).

Residues 114–139 (PTLRLHPPRGGHDGIKHPTKEGGQLG) are disordered. Residues 123 to 133 (GGHDGIKHPTK) are compositionally biased toward basic and acidic residues.

Belongs to the universal ribosomal protein uL30 family. In terms of assembly, part of the 50S ribosomal subunit.

This Natronomonas pharaonis (strain ATCC 35678 / DSM 2160 / CIP 103997 / JCM 8858 / NBRC 14720 / NCIMB 2260 / Gabara) (Halobacterium pharaonis) protein is Large ribosomal subunit protein uL30.